We begin with the raw amino-acid sequence, 188 residues long: MFKGILLCVLFAVLSANPLSQPEGFADEERDVRGLASFLGKALKAGLKIGAHLLGGAPQQREANDERRFADDDDDVNERDVRGFASFLGKALKAALKIGANMLGGTPQQREANDERRFADDEDDVNERDVRGFGSFLGKALKAALKIGANALGGSPQQREANDERRFADGQQDYTGWMDFGRRNGEDD.

The first 26 residues, 1 to 26, serve as a signal peptide directing secretion; that stretch reads MFKGILLCVLFAVLSANPLSQPEGFA. Residues 27 to 170 constitute a propeptide that is removed on maturation; the sequence is DEERDVRGLA…ANDERRFADG (144 aa). Residues 152–188 are disordered; the sequence is LGGSPQQREANDERRFADGQQDYTGWMDFGRRNGEDD. At Tyr-174 the chain carries Sulfotyrosine. At Phe-180 the chain carries Phenylalanine amide. The propeptide occupies 184–188; the sequence is NGEDD.

The protein belongs to the gastrin/cholecystokinin family. In terms of tissue distribution, expressed by the skin glands.

The protein resides in the secreted. The pharmacological activities of caerulein are quite similar to the physiological activities of gastrin and related peptides. The sequence is that of Preprocaerulein type-1 from Xenopus laevis (African clawed frog).